The primary structure comprises 192 residues: Ornithine lipid N-methyltransferase (192 aa).

The protein belongs to the methyltransferase superfamily.

It catalyses the reaction an N(2)-[(3R)-3-(2-saturated-acyloxy)acyl]-L-ornithine lipid + 3 S-adenosyl-L-methionine = an N,N,N-trimethylornithine lipid + 3 S-adenosyl-L-homocysteine + 3 H(+). Functionally, catalyzes the 3-fold methylation of ornithine lipids. Forms ornithine lipids that are mono-, di-, and trimethylated on the delta-nitrogen of the ornithine head group. The sequence is that of Ornithine lipid N-methyltransferase from Singulisphaera acidiphila (strain ATCC BAA-1392 / DSM 18658 / VKM B-2454 / MOB10).